A 284-amino-acid chain; its full sequence is Undecaprenyl-diphosphatase (284 aa).

The next 8 membrane-spanning stretches (helical) occupy residues 1-21, 43-63, 88-108, 116-136, 149-169, 193-213, 225-245, and 259-279; these read MNWLHAIILGIVEGITEFLPV, ITAFTAIIQVGAIIAAILYFW, YTLGWGIILGSIPVGVVGLVF, LSSLWVVAIALILWSGVMWLG, IGIVDAIVIGCFQALAPLFPG, LSFFMGIPALVAAGIYESVSA, VAIGWGPTILATVVSLIVAYV, and FTGFMWYRVVVGLIIIGLILS.

Belongs to the UppP family.

It is found in the cell membrane. It catalyses the reaction di-trans,octa-cis-undecaprenyl diphosphate + H2O = di-trans,octa-cis-undecaprenyl phosphate + phosphate + H(+). Its function is as follows. Catalyzes the dephosphorylation of undecaprenyl diphosphate (UPP). Confers resistance to bacitracin. The sequence is that of Undecaprenyl-diphosphatase from Cutibacterium acnes (strain DSM 16379 / KPA171202) (Propionibacterium acnes).